A 1342-amino-acid polypeptide reads, in one-letter code: DNA-directed RNA polymerase subunit beta (1342 aa).

The protein belongs to the RNA polymerase beta chain family. The RNAP catalytic core consists of 2 alpha, 1 beta, 1 beta' and 1 omega subunit. When a sigma factor is associated with the core the holoenzyme is formed, which can initiate transcription.

It carries out the reaction RNA(n) + a ribonucleoside 5'-triphosphate = RNA(n+1) + diphosphate. Functionally, DNA-dependent RNA polymerase catalyzes the transcription of DNA into RNA using the four ribonucleoside triphosphates as substrates. The protein is DNA-directed RNA polymerase subunit beta of Salmonella typhimurium (strain LT2 / SGSC1412 / ATCC 700720).